The following is a 104-amino-acid chain: Co-chaperonin GroES 3 (104 aa).

The protein belongs to the GroES chaperonin family. As to quaternary structure, heptamer of 7 subunits arranged in a ring. Interacts with the chaperonin GroEL.

It localises to the cytoplasm. Functionally, together with the chaperonin GroEL, plays an essential role in assisting protein folding. The GroEL-GroES system forms a nano-cage that allows encapsulation of the non-native substrate proteins and provides a physical environment optimized to promote and accelerate protein folding. GroES binds to the apical surface of the GroEL ring, thereby capping the opening of the GroEL channel. In Bradyrhizobium diazoefficiens (strain JCM 10833 / BCRC 13528 / IAM 13628 / NBRC 14792 / USDA 110), this protein is Co-chaperonin GroES 3.